An 838-amino-acid polypeptide reads, in one-letter code: Glycogen phosphorylase, brain form (838 aa).

N-acetylalanine is present on Ala-2. Residue Ser-15 is modified to Phosphoserine. Residues Asp-43, Tyr-197, and Arg-310 each coordinate AMP. Position 197 is a phosphotyrosine (Tyr-197). Tyr-473 is subject to Phosphotyrosine. Ser-524 carries the post-translational modification Phosphoserine. Pyridoxal 5'-phosphate is bound at residue Lys-569. Residues 677 to 678 (TG) form a pyridoxal 5'-phosphate region. The residue at position 681 (Lys-681) is an N6-(pyridoxal phosphate)lysine.

This sequence belongs to the glycogen phosphorylase family. Homodimer. Dimers associate into a tetramer to form the enzymatically active phosphorylase A. The cofactor is pyridoxal 5'-phosphate. Post-translationally, phosphorylation of Ser-15 converts phosphorylase B (unphosphorylated) to phosphorylase A.

It catalyses the reaction [(1-&gt;4)-alpha-D-glucosyl](n) + phosphate = [(1-&gt;4)-alpha-D-glucosyl](n-1) + alpha-D-glucose 1-phosphate. Activity of phosphorylase is controlled both by allosteric means (through the non-covalent binding of metabolites) and by covalent modification. Thus AMP allosterically activates, whereas ATP, ADP, and glucose-6-phosphate allosterically inhibit, phosphorylase B. Glycogen phosphorylase that regulates glycogen mobilization. Phosphorylase is an important allosteric enzyme in carbohydrate metabolism. Enzymes from different sources differ in their regulatory mechanisms and in their natural substrates. However, all known phosphorylases share catalytic and structural properties. The protein is Glycogen phosphorylase, brain form (Pygb) of Rattus norvegicus (Rat).